A 362-amino-acid chain; its full sequence is sn-glycerol-3-phosphate import ATP-binding protein UgpC (362 aa).

The region spanning 4 to 235 (LKLQAVTKSY…PATLFVASFI (232 aa)) is the ABC transporter domain. 37–44 (GPSGCGKS) contributes to the ATP binding site.

It belongs to the ABC transporter superfamily. sn-glycerol-3-phosphate importer (TC 3.A.1.1.3) family. As to quaternary structure, the complex is composed of two ATP-binding proteins (UgpC), two transmembrane proteins (UgpA and UgpE) and a solute-binding protein (UgpB).

It localises to the cell inner membrane. The enzyme catalyses sn-glycerol 3-phosphate(out) + ATP + H2O = sn-glycerol 3-phosphate(in) + ADP + phosphate + H(+). Functionally, part of the ABC transporter complex UgpBAEC involved in sn-glycerol-3-phosphate (G3P) import. Responsible for energy coupling to the transport system. In Yersinia enterocolitica serotype O:8 / biotype 1B (strain NCTC 13174 / 8081), this protein is sn-glycerol-3-phosphate import ATP-binding protein UgpC.